The sequence spans 168 residues: WAP four-disulfide core domain protein 2 (168 aa).

Positions 1 to 30 (MPACRLCLLATGLLLGLLLFTPLSATGTRA) are cleaved as a signal peptide. 2 consecutive WAP domains span residues 31-74 (EKPG…SKPN) and 119-167 (NGEK…TTPK). Intrachain disulfides connect Cys36/Cys62, Cys45/Cys66, Cys49/Cys61, and Cys55/Cys70. The segment at 100–123 (PLSRGQVSTKPPVVTKEGGNGEKQ) is disordered. 4 disulfides stabilise this stretch: Cys126–Cys154, Cys137–Cys158, Cys141–Cys153, and Cys147–Cys163.

Homotrimer; disulfide-linked.

The protein localises to the secreted. Its function is as follows. Broad range protease inhibitor. The protein is WAP four-disulfide core domain protein 2 (Wfdc2) of Rattus norvegicus (Rat).